The sequence spans 282 residues: Nucleotide-binding protein Ping_2894 (282 aa).

Position 8-15 (Gly-8–Thr-15) interacts with ATP. GTP is bound at residue Asp-56 to Asn-59.

This sequence belongs to the RapZ-like family.

Functionally, displays ATPase and GTPase activities. The polypeptide is Nucleotide-binding protein Ping_2894 (Psychromonas ingrahamii (strain DSM 17664 / CCUG 51855 / 37)).